A 178-amino-acid polypeptide reads, in one-letter code: UPF0215 protein STK_03040 (178 aa).

This sequence belongs to the UPF0215 family.

The sequence is that of UPF0215 protein STK_03040 from Sulfurisphaera tokodaii (strain DSM 16993 / JCM 10545 / NBRC 100140 / 7) (Sulfolobus tokodaii).